A 442-amino-acid polypeptide reads, in one-letter code: UDP-N-acetylmuramate--L-alanine ligase (442 aa).

Residue 109–115 (GAHGKTS) participates in ATP binding.

This sequence belongs to the MurCDEF family.

Its subcellular location is the cytoplasm. It carries out the reaction UDP-N-acetyl-alpha-D-muramate + L-alanine + ATP = UDP-N-acetyl-alpha-D-muramoyl-L-alanine + ADP + phosphate + H(+). The protein operates within cell wall biogenesis; peptidoglycan biosynthesis. In terms of biological role, cell wall formation. The sequence is that of UDP-N-acetylmuramate--L-alanine ligase from Streptococcus pyogenes serotype M3 (strain SSI-1).